Here is a 184-residue protein sequence, read N- to C-terminus: UPF0215 protein MJ1150 (184 aa).

It belongs to the UPF0215 family.

This chain is UPF0215 protein MJ1150, found in Methanocaldococcus jannaschii (strain ATCC 43067 / DSM 2661 / JAL-1 / JCM 10045 / NBRC 100440) (Methanococcus jannaschii).